Here is a 391-residue protein sequence, read N- to C-terminus: Na(+)/H(+) antiporter NhaA (391 aa).

11 helical membrane passes run Ala-14–Leu-34, Leu-59–Val-79, Ser-95–Phe-115, Ala-124–Leu-144, Val-154–Phe-174, Ser-177–Leu-197, Leu-213–Ile-233, Phe-261–Leu-281, Ile-290–Ile-310, Ile-328–Leu-348, and Leu-363–Val-383.

This sequence belongs to the NhaA Na(+)/H(+) (TC 2.A.33) antiporter family.

Its subcellular location is the cell inner membrane. It carries out the reaction Na(+)(in) + 2 H(+)(out) = Na(+)(out) + 2 H(+)(in). In terms of biological role, na(+)/H(+) antiporter that extrudes sodium in exchange for external protons. This is Na(+)/H(+) antiporter NhaA from Shewanella putrefaciens (strain CN-32 / ATCC BAA-453).